Here is a 372-residue protein sequence, read N- to C-terminus: 4-hydroxy-3-methylbut-2-en-1-yl diphosphate synthase (flavodoxin) (372 aa).

The [4Fe-4S] cluster site is built by C270, C273, C305, and E312.

This sequence belongs to the IspG family. It depends on [4Fe-4S] cluster as a cofactor.

The catalysed reaction is (2E)-4-hydroxy-3-methylbut-2-enyl diphosphate + oxidized [flavodoxin] + H2O + 2 H(+) = 2-C-methyl-D-erythritol 2,4-cyclic diphosphate + reduced [flavodoxin]. It participates in isoprenoid biosynthesis; isopentenyl diphosphate biosynthesis via DXP pathway; isopentenyl diphosphate from 1-deoxy-D-xylulose 5-phosphate: step 5/6. Its function is as follows. Converts 2C-methyl-D-erythritol 2,4-cyclodiphosphate (ME-2,4cPP) into 1-hydroxy-2-methyl-2-(E)-butenyl 4-diphosphate. This Vibrio campbellii (strain ATCC BAA-1116) protein is 4-hydroxy-3-methylbut-2-en-1-yl diphosphate synthase (flavodoxin).